The chain runs to 525 residues: GMP synthase [glutamine-hydrolyzing] (525 aa).

A Glutamine amidotransferase type-1 domain is found at 9–207 (RILILDFGSQ…VLDICGCEAL (199 aa)). Cysteine 86 functions as the Nucleophile in the catalytic mechanism. Catalysis depends on residues histidine 181 and glutamate 183. The GMPS ATP-PPase domain maps to 208–400 (WTPSKIAEDA…LGLPYDMVYR (193 aa)). Position 235-241 (235-241 (SGGVDSS)) interacts with ATP.

Homodimer.

The catalysed reaction is XMP + L-glutamine + ATP + H2O = GMP + L-glutamate + AMP + diphosphate + 2 H(+). Its pathway is purine metabolism; GMP biosynthesis; GMP from XMP (L-Gln route): step 1/1. Catalyzes the synthesis of GMP from XMP. In Pseudomonas fluorescens (strain Pf0-1), this protein is GMP synthase [glutamine-hydrolyzing].